Here is a 303-residue protein sequence, read N- to C-terminus: Coenzyme PQQ synthesis protein B (303 aa).

This sequence belongs to the PqqB family.

It participates in cofactor biosynthesis; pyrroloquinoline quinone biosynthesis. Its function is as follows. May be involved in the transport of PQQ or its precursor to the periplasm. This Pseudomonas syringae pv. syringae (strain B728a) protein is Coenzyme PQQ synthesis protein B.